Reading from the N-terminus, the 319-residue chain is Beta-ketoacyl-[acyl-carrier-protein] synthase III (319 aa).

Residues Cys110 and His246 contribute to the active site. Residues 247–251 (QANYR) are ACP-binding. Residue Asn276 is part of the active site.

This sequence belongs to the thiolase-like superfamily. FabH family. Homodimer.

It localises to the cytoplasm. The catalysed reaction is malonyl-[ACP] + acetyl-CoA + H(+) = 3-oxobutanoyl-[ACP] + CO2 + CoA. The protein operates within lipid metabolism; fatty acid biosynthesis. In terms of biological role, catalyzes the condensation reaction of fatty acid synthesis by the addition to an acyl acceptor of two carbons from malonyl-ACP. Catalyzes the first condensation reaction which initiates fatty acid synthesis and may therefore play a role in governing the total rate of fatty acid production. Possesses both acetoacetyl-ACP synthase and acetyl transacylase activities. Its substrate specificity determines the biosynthesis of branched-chain and/or straight-chain of fatty acids. This chain is Beta-ketoacyl-[acyl-carrier-protein] synthase III, found in Lactobacillus delbrueckii subsp. bulgaricus (strain ATCC 11842 / DSM 20081 / BCRC 10696 / JCM 1002 / NBRC 13953 / NCIMB 11778 / NCTC 12712 / WDCM 00102 / Lb 14).